A 145-amino-acid chain; its full sequence is Large ribosomal subunit protein mL59 (145 aa).

Residues 123 to 135 (LKKTSKFKNERQK) show a composition bias toward basic and acidic residues. A disordered region spans residues 123–145 (LKKTSKFKNERQKASKIAKPSPF).

Belongs to the mitochondrion-specific ribosomal protein mL59 family. In terms of assembly, component of the mitochondrial large ribosomal subunit (mt-LSU). Mature yeast 74S mitochondrial ribosomes consist of a small (37S) and a large (54S) subunit. The 37S small subunit contains a 15S ribosomal RNA (15S mt-rRNA) and at least 32 different proteins. The 54S large subunit contains a 21S rRNA (21S mt-rRNA) and at least 45 different proteins.

The protein localises to the mitochondrion. Functionally, component of the mitochondrial ribosome (mitoribosome), a dedicated translation machinery responsible for the synthesis of mitochondrial genome-encoded proteins, including at least some of the essential transmembrane subunits of the mitochondrial respiratory chain. The mitoribosomes are attached to the mitochondrial inner membrane and translation products are cotranslationally integrated into the membrane. This chain is Large ribosomal subunit protein mL59 (mrpl25), found in Schizosaccharomyces pombe (strain 972 / ATCC 24843) (Fission yeast).